The sequence spans 311 residues: tRNA dimethylallyltransferase (311 aa).

10 to 17 (GPTASGKT) serves as a coordination point for ATP. 12-17 (TASGKT) serves as a coordination point for substrate. Interaction with substrate tRNA stretches follow at residues 35 to 38 (DSAL), 159 to 163 (QRINR), and 240 to 245 (RCVGYR).

This sequence belongs to the IPP transferase family. In terms of assembly, monomer. Mg(2+) is required as a cofactor.

It catalyses the reaction adenosine(37) in tRNA + dimethylallyl diphosphate = N(6)-dimethylallyladenosine(37) in tRNA + diphosphate. Catalyzes the transfer of a dimethylallyl group onto the adenine at position 37 in tRNAs that read codons beginning with uridine, leading to the formation of N6-(dimethylallyl)adenosine (i(6)A). This Haemophilus influenzae (strain 86-028NP) protein is tRNA dimethylallyltransferase.